Here is a 1241-residue protein sequence, read N- to C-terminus: DNA-directed RNA polymerase subunit beta (1241 aa).

Residues 1201–1224 (AEEEQDTDVDYITEDDFESPDPEI) form a disordered region.

Belongs to the RNA polymerase beta chain family. In terms of assembly, the RNAP catalytic core consists of 2 alpha, 1 beta, 1 beta' and 1 omega subunit. When a sigma factor is associated with the core the holoenzyme is formed, which can initiate transcription.

The enzyme catalyses RNA(n) + a ribonucleoside 5'-triphosphate = RNA(n+1) + diphosphate. Functionally, DNA-dependent RNA polymerase catalyzes the transcription of DNA into RNA using the four ribonucleoside triphosphates as substrates. The protein is DNA-directed RNA polymerase subunit beta of Alkaliphilus oremlandii (strain OhILAs) (Clostridium oremlandii (strain OhILAs)).